The chain runs to 477 residues: MAKDALIVKTTPLPQSRISFELEIPSETCKTCVNETISTISRSAKIPGFRLGKIPKQVLIQRIGITQLHASALEKIIDKSWQEALKIKSIEPLSEPELVDGFESLLAKFSPEKSLKVTLQTDVAPELKLKKSKGLSVEISKTKFDPKSIDEALEKSRNQFANIIPVTNRAAKLGDIAVVSFKGKYKDSGKEIDGGTSESMDLELEKNKMIPGFVEGIVKMKIGDTKTLNLKFPEDYSHEDSRGKEAIFEVNLKDLKEKELPELNDDFAKQSGNKESLKELKKDIEKQLKDNFEKTQKDIKIEALLDALTNELVTEIPKSMIDLEVRNNIEQTAQRFAQQGLDVKSTFTPELVKSLAESTRPQAEKNVQRNLALKALAEKENITIDKSEIDLKMKEYDDVISQSSKQIDIKKLTEVISNDLLKEKLIIWLEENSEVNEKTTKTSKATKTSKTTKATKTATKTTKTTKTTKTQNKKEKK.

The PPIase FKBP-type domain maps to 174–261 (GDIAVVSFKG…LKDLKEKELP (88 aa)). The interval 435 to 477 (VNEKTTKTSKATKTSKTTKATKTATKTTKTTKTTKTQNKKEKK) is disordered. Positions 442–470 (TSKATKTSKTTKATKTATKTTKTTKTTKT) are enriched in low complexity.

Belongs to the FKBP-type PPIase family. Tig subfamily.

The protein resides in the cytoplasm. It catalyses the reaction [protein]-peptidylproline (omega=180) = [protein]-peptidylproline (omega=0). Functionally, involved in protein export. Acts as a chaperone by maintaining the newly synthesized protein in an open conformation. Functions as a peptidyl-prolyl cis-trans isomerase. The chain is Trigger factor from Prochlorococcus marinus (strain MIT 9301).